The following is an 851-amino-acid chain: DNA mismatch repair protein MutS (851 aa).

Residue 614-621 coordinates ATP; that stretch reads GPNMGGKS.

It belongs to the DNA mismatch repair MutS family.

This protein is involved in the repair of mismatches in DNA. It is possible that it carries out the mismatch recognition step. This protein has a weak ATPase activity. The chain is DNA mismatch repair protein MutS from Yersinia pseudotuberculosis serotype O:1b (strain IP 31758).